Reading from the N-terminus, the 228-residue chain is Urease accessory protein UreF (228 aa).

Belongs to the UreF family. UreD, UreF and UreG form a complex that acts as a GTP-hydrolysis-dependent molecular chaperone, activating the urease apoprotein by helping to assemble the nickel containing metallocenter of UreC. The UreE protein probably delivers the nickel.

It localises to the cytoplasm. In terms of biological role, required for maturation of urease via the functional incorporation of the urease nickel metallocenter. This chain is Urease accessory protein UreF, found in Yersinia enterocolitica serotype O:8 / biotype 1B (strain NCTC 13174 / 8081).